A 332-amino-acid chain; its full sequence is MTGQHADIAPATGPRIVVLVGGVGGARFLQGVRELLPDAEVSAIVNVGDDVWMHGLRICPDLDTCMYTLGGGIDTERGWGRVGETWHAKEELAAYHAKPDWFGLGDRDLATHLIRTEMLRAGYPLSAVTEALCNRWQPGVKLIPATDDRCETHVVVTDPENPGERRAIHFQEWWVRYRANVETHGFATIGADEAKPAPNVIDLIESADAVLLAPSNPVVSIGAILAVPGIRGALRTTRAKVIGVSGVIDGKPLRGMADECLSVIGVETTAEAVGRHYGARSATGILDGWLIHTTDTAEVPGVEVRSVPLLMTDPPTTAEIVREALDLAGVKW.

Asp-63 provides a ligand contact to 7,8-didemethyl-8-hydroxy-5-deazariboflavin.

It belongs to the CofD family. In terms of assembly, homodimer. Mg(2+) is required as a cofactor.

It carries out the reaction enolpyruvoyl-2-diphospho-5'-guanosine + 7,8-didemethyl-8-hydroxy-5-deazariboflavin = dehydro coenzyme F420-0 + GMP + H(+). Its pathway is cofactor biosynthesis; coenzyme F420 biosynthesis. Functionally, catalyzes the transfer of the phosphoenolpyruvate moiety from enoylpyruvoyl-2-diphospho-5'-guanosine (EPPG) to 7,8-didemethyl-8-hydroxy-5-deazariboflavin (FO) with the formation of dehydro coenzyme F420-0 and GMP. This Nocardia farcinica (strain IFM 10152) protein is Phosphoenolpyruvate transferase.